Consider the following 161-residue polypeptide: Large ribosomal subunit protein uL10 (161 aa).

This sequence belongs to the universal ribosomal protein uL10 family. Part of the ribosomal stalk of the 50S ribosomal subunit. The N-terminus interacts with L11 and the large rRNA to form the base of the stalk. The C-terminus forms an elongated spine to which L12 dimers bind in a sequential fashion forming a multimeric L10(L12)X complex.

In terms of biological role, forms part of the ribosomal stalk, playing a central role in the interaction of the ribosome with GTP-bound translation factors. The sequence is that of Large ribosomal subunit protein uL10 from Malacoplasma penetrans (strain HF-2) (Mycoplasma penetrans).